A 195-amino-acid polypeptide reads, in one-letter code: Probable GTP-binding protein EngB (195 aa).

The 172-residue stretch at 24–195 (ELPEIALAGR…EAWDAILEKL (172 aa)) folds into the EngB-type G domain. Residues 32–39 (GRSNVGKS), 59–63 (GKTQL), 77–80 (DVPG), 144–147 (TKAD), and 176–178 (FSS) each bind GTP. 2 residues coordinate Mg(2+): serine 39 and threonine 61.

This sequence belongs to the TRAFAC class TrmE-Era-EngA-EngB-Septin-like GTPase superfamily. EngB GTPase family. Mg(2+) is required as a cofactor.

In terms of biological role, necessary for normal cell division and for the maintenance of normal septation. This chain is Probable GTP-binding protein EngB, found in Streptococcus pneumoniae (strain Hungary19A-6).